We begin with the raw amino-acid sequence, 983 residues long: Protein CLASP-3 (983 aa).

2 disordered regions span residues 356 to 393 (YPNRPGSRTRTSSITSTDSRDTSPTRRNSPLPPETQKA) and 666 to 690 (SNNIATNSGATASRETSNTSFQKES). A compositionally biased stretch (low complexity) spans 359 to 372 (RPGSRTRTSSITST). One copy of the HEAT repeat lies at 918 to 956 (ITPTIIKAYQSTSSTVRKTVVYCLVAMVNRVGEQRMTPH).

This sequence belongs to the CLASP family.

The protein resides in the cytoplasm. It localises to the cytoskeleton. In terms of biological role, microtubule plus-end tracking protein that promotes the stabilization of dynamic microtubules. The sequence is that of Protein CLASP-3 (cls-3) from Caenorhabditis elegans.